Consider the following 127-residue polypeptide: MAGVRARAPLPLALLLSLPAAPGGRDPSASRARFPQRLGRAPCFEVGLRKPPPPPLLSPPSFSSGSSRPLQRPRGPKDGAGRKVCAKLVKRLPGESGSCEDGQSAPAQPPRRRTGTRACPPRAPLWR.

An N-terminal signal peptide occupies residues 1–23 (MAGVRARAPLPLALLLSLPAAPG). The interval 43–127 (CFEVGLRKPP…ACPPRAPLWR (85 aa)) is disordered. Positions 59–70 (PPSFSSGSSRPL) are enriched in low complexity.

It localises to the secreted. This is an uncharacterized protein from Homo sapiens (Human).